The following is a 270-amino-acid chain: Glucosamine-6-phosphate deaminase (270 aa).

The Proton acceptor; for enolization step role is filled by Asp-68. Asp-145 (for ring-opening step) is an active-site residue. His-147 serves as the catalytic Proton acceptor; for ring-opening step. The For ring-opening step role is filled by Glu-152.

This sequence belongs to the glucosamine/galactosamine-6-phosphate isomerase family. NagB subfamily.

The catalysed reaction is alpha-D-glucosamine 6-phosphate + H2O = beta-D-fructose 6-phosphate + NH4(+). It participates in amino-sugar metabolism; N-acetylneuraminate degradation; D-fructose 6-phosphate from N-acetylneuraminate: step 5/5. In terms of biological role, catalyzes the reversible isomerization-deamination of glucosamine 6-phosphate (GlcN6P) to form fructose 6-phosphate (Fru6P) and ammonium ion. This Bifidobacterium longum (strain DJO10A) protein is Glucosamine-6-phosphate deaminase.